The following is a 70-amino-acid chain: MFTLKKSLLLLFFLGTINLSLCEQERNAEEERRDDSDKRDVEVEKRFLSTLLNVASNVVPTLICKITKKC.

The signal sequence occupies residues 1-22; the sequence is MFTLKKSLLLLFFLGTINLSLC. A propeptide spans 23-44 (removed in mature form); it reads EQERNAEEERRDDSDKRDVEVE. An intrachain disulfide couples cysteine 64 to cysteine 70.

It belongs to the frog skin active peptide (FSAP) family. Brevinin subfamily. As to expression, expressed by the skin glands.

It is found in the secreted. Its function is as follows. Antimicrobial peptide active against a variety of Gram-positive and some Gram-negative bacterial strains. Has antifungal activity against a slime mold isolate. Has hemolytic activity against human erythrocytes. In Amolops chunganensis (Chungan torrent frog), this protein is Brevinin-1CG3.